Reading from the N-terminus, the 400-residue chain is Coenzyme A biosynthesis bifunctional protein CoaBC (400 aa).

The segment at 1 to 190 (MKLNGKHIVV…SQKQDLQGLN (190 aa)) is phosphopantothenoylcysteine decarboxylase. The active-site Proton donor is the cysteine 158. Residues 191–400 (VSITAGPTRE…EIIERYQKTL (210 aa)) form a phosphopantothenate--cysteine ligase region. CTP contacts are provided by residues 273-275 (GCA), aspartate 279, lysine 289, 305-308 (PDII), phenylalanine 324, lysine 338, and lysine 342.

The protein in the N-terminal section; belongs to the HFCD (homo-oligomeric flavin containing Cys decarboxylase) superfamily. This sequence in the C-terminal section; belongs to the PPC synthetase family. Requires Mg(2+) as cofactor. It depends on FMN as a cofactor.

It carries out the reaction N-[(R)-4-phosphopantothenoyl]-L-cysteine + H(+) = (R)-4'-phosphopantetheine + CO2. The enzyme catalyses (R)-4'-phosphopantothenate + L-cysteine + CTP = N-[(R)-4-phosphopantothenoyl]-L-cysteine + CMP + diphosphate + H(+). It functions in the pathway cofactor biosynthesis; coenzyme A biosynthesis; CoA from (R)-pantothenate: step 2/5. Its pathway is cofactor biosynthesis; coenzyme A biosynthesis; CoA from (R)-pantothenate: step 3/5. Functionally, catalyzes two sequential steps in the biosynthesis of coenzyme A. In the first step cysteine is conjugated to 4'-phosphopantothenate to form 4-phosphopantothenoylcysteine. In the second step the latter compound is decarboxylated to form 4'-phosphopantotheine. The sequence is that of Coenzyme A biosynthesis bifunctional protein CoaBC from Haemophilus influenzae (strain ATCC 51907 / DSM 11121 / KW20 / Rd).